The chain runs to 254 residues: Autophagy-related protein 5 (254 aa).

A Glycyl lysine isopeptide (Lys-Gly) (interchain with G-Cter in ATG12) cross-link involves residue lysine 102.

This sequence belongs to the ATG5 family. Conjugated with ATG12. The ATG5-ATG12 conjugate forms a complex with several units of ATG16. The ATG12-ATG5 conjugate also associates with ATG3. Conjugated to ATG12; which is essential for autophagy. Conjugation with ATG12 involves ATG7 as an E1-like activating enzyme and ATG10 as an E2-like conjugating enzyme.

The protein resides in the preautophagosomal structure membrane. Functionally, involved in cytoplasm to vacuole transport (Cvt) and autophagic vesicle formation. Autophagy is essential for maintenance of amino acid levels and protein synthesis under nitrogen starvation. Required for selective autophagic degradation of the nucleus (nucleophagy). Also required for mitophagy, which eliminates defective or superfluous mitochondria in order to fulfill cellular energy requirements and prevent excess ROS production. Conjugation with ATG12, through a ubiquitin-like conjugating system involving ATG7 as an E1-like activating enzyme and ATG10 as an E2-like conjugating enzyme, is essential for its function. The ATG12-ATG5 conjugate acts as an E3-like enzyme which is required for lipidation of ATG8 and ATG8 association to the vesicle membranes. ATG12-ATG5 rearranges the ATG3 catalytic center and enhances its E2 activity. Autophagy is required for proper vegetative growth, asexual/sexual reproduction, and full virulence. Autophagy is particularly involved in the biosynthesis of deoxynivalenol (DON), an important virulence determinant. This Gibberella zeae (strain ATCC MYA-4620 / CBS 123657 / FGSC 9075 / NRRL 31084 / PH-1) (Wheat head blight fungus) protein is Autophagy-related protein 5.